The sequence spans 55 residues: Large ribosomal subunit protein bL32 (55 aa).

The segment covering 1–19 has biased composition (basic residues); it reads MAVPKFKKSRANTRARRSQ. The segment at 1 to 22 is disordered; the sequence is MAVPKFKKSRANTRARRSQWKA.

The protein belongs to the bacterial ribosomal protein bL32 family.

The sequence is that of Large ribosomal subunit protein bL32 from Corynebacterium urealyticum (strain ATCC 43042 / DSM 7109).